The following is a 31-amino-acid chain: Morintide mO3 (31 aa).

The Chitin-binding type-1 domain occupies 1-30 (NRLCCSQYGFCGTTSEYCSRANGCQSNCWG). Cystine bridges form between C4/C18 and C24/C28.

As to expression, seeds (at protein level).

In terms of biological role, chitin-binding protein which functions in defense against chitin-containing fungal pathogens. The polypeptide is Morintide mO3 (Moringa oleifera (Horseradish tree)).